Here is a 215-residue protein sequence, read N- to C-terminus: Urease accessory protein UreG (215 aa).

24–31 contributes to the GTP binding site; sequence GPVGSGKT.

Belongs to the SIMIBI class G3E GTPase family. UreG subfamily. In terms of assembly, homodimer. UreD, UreF and UreG form a complex that acts as a GTP-hydrolysis-dependent molecular chaperone, activating the urease apoprotein by helping to assemble the nickel containing metallocenter of UreC. The UreE protein probably delivers the nickel.

It is found in the cytoplasm. Its function is as follows. Facilitates the functional incorporation of the urease nickel metallocenter. This process requires GTP hydrolysis, probably effectuated by UreG. The chain is Urease accessory protein UreG from Burkholderia orbicola (strain MC0-3).